The chain runs to 296 residues: Cytidine deaminase (296 aa).

2 CMP/dCMP-type deaminase domains span residues 47-167 (TEAE…FGPK) and 186-296 (DSSD…VDPV). Residue 88-90 (NLE) coordinates substrate. Residue histidine 101 coordinates Zn(2+). Glutamate 103 functions as the Proton donor in the catalytic mechanism. Zn(2+)-binding residues include cysteine 128 and cysteine 131.

Belongs to the cytidine and deoxycytidylate deaminase family. As to quaternary structure, homodimer. Requires Zn(2+) as cofactor.

It carries out the reaction cytidine + H2O + H(+) = uridine + NH4(+). The enzyme catalyses 2'-deoxycytidine + H2O + H(+) = 2'-deoxyuridine + NH4(+). Functionally, this enzyme scavenges exogenous and endogenous cytidine and 2'-deoxycytidine for UMP synthesis. In Shewanella sp. (strain ANA-3), this protein is Cytidine deaminase.